A 354-amino-acid chain; its full sequence is Rhodopsin (354 aa).

The Extracellular segment spans residues 1–36; that stretch reads MNGTEGPYFYVPMVNTTGIVRSPYEYPQYYLVSPAA. N2 and N15 each carry an N-linked (GlcNAc...) asparagine glycan. A helical membrane pass occupies residues 37 to 61; sequence YACLGAYMFFLILVGFPVNFLTLYV. Over 62–73 the chain is Cytoplasmic; sequence TIEHKKLRTPLN. The helical transmembrane segment at 74-96 threads the bilayer; the sequence is YILLNLAVADLFMVFGGFTTTIY. Over 97–110 the chain is Extracellular; sequence TSMHGYFVLGRLGC. C110 and C187 form a disulfide bridge. Residues 111-133 traverse the membrane as a helical segment; that stretch reads NLEGYFATLGGEIGLWSLVVLAV. The 'Ionic lock' involved in activated form stabilization motif lies at 134 to 136; it reads ERW. At 134–152 the chain is on the cytoplasmic side; that stretch reads ERWLVVCKPISNFRFTENH. A helical membrane pass occupies residues 153–173; that stretch reads AIMGLVFTWIMANACAAPPLL. Over 174-202 the chain is Extracellular; sequence GWSRYIPEGMQCSCGVDYYTRAEGFNNES. The chain crosses the membrane as a helical span at residues 203-224; that stretch reads FVIYMFICHFCIPLVVVFFCYG. The Cytoplasmic segment spans residues 225–252; it reads RLLCAVKEAAAAQQESETTQRAEREVTR. Residues 253–274 form a helical membrane-spanning segment; that stretch reads MVVILVIGFLVCWTPYASVAWY. At 275 to 286 the chain is on the extracellular side; sequence IFSNQGSEFGPL. The chain crosses the membrane as a helical span at residues 287–308; it reads FMTIPAFFAKSSSIYNPMIYIC. An N6-(retinylidene)lysine modification is found at K296. Topologically, residues 309–354 are cytoplasmic; sequence MNKQFRHCMITTLCCGKNPFEEEEGASTTASKTEASSVSSSSVSPA. Residues C322 and C323 are each lipidated (S-palmitoyl cysteine). Residues 333 to 354 form a disordered region; the sequence is GASTTASKTEASSVSSSSVSPA. Residues 334 to 354 show a composition bias toward low complexity; sequence ASTTASKTEASSVSSSSVSPA.

The protein belongs to the G-protein coupled receptor 1 family. Opsin subfamily. Phosphorylated on some or all of the serine and threonine residues present in the C-terminal region. In terms of processing, contains one covalently linked retinal chromophore.

The protein localises to the membrane. Its subcellular location is the cell projection. It localises to the cilium. It is found in the photoreceptor outer segment. Functionally, photoreceptor required for image-forming vision at low light intensity. While most salt water fish species use retinal as chromophore, most freshwater fish use 3-dehydroretinal, or a mixture of retinal and 3-dehydroretinal. Light-induced isomerization of 11-cis to all-trans retinal triggers a conformational change that activates signaling via G-proteins. Subsequent receptor phosphorylation mediates displacement of the bound G-protein alpha subunit by arrestin and terminates signaling. This is Rhodopsin (rho) from Gambusia affinis (Western mosquitofish).